Consider the following 303-residue polypeptide: Bifunctional protein FolD (303 aa).

Residues 165–167, Ser190, and Ile231 each bind NADP(+); that span reads GRS.

It belongs to the tetrahydrofolate dehydrogenase/cyclohydrolase family. In terms of assembly, homodimer.

It catalyses the reaction (6R)-5,10-methylene-5,6,7,8-tetrahydrofolate + NADP(+) = (6R)-5,10-methenyltetrahydrofolate + NADPH. It carries out the reaction (6R)-5,10-methenyltetrahydrofolate + H2O = (6R)-10-formyltetrahydrofolate + H(+). Its pathway is one-carbon metabolism; tetrahydrofolate interconversion. Its function is as follows. Catalyzes the oxidation of 5,10-methylenetetrahydrofolate to 5,10-methenyltetrahydrofolate and then the hydrolysis of 5,10-methenyltetrahydrofolate to 10-formyltetrahydrofolate. This chain is Bifunctional protein FolD, found in Prochlorococcus marinus (strain NATL2A).